The sequence spans 188 residues: MGLKADSWIKKMSLEHGMISPFCEKQIGKDVISYGLSSYGYDIRVGSEFMLFDNKNALIDPKNFDPNNTTKIDASKEGFFILPANAFALAHTIEYFKMPKDTLAICLGKSTYARCGIIVNVTPFEPEFEGYITIEISNTTNLPAKVYANEGIAQVVFLQGDEVCEQSYKDRGGKYQGQVGITLPKILK.

A dCTP-binding site is contributed by 109 to 114 (KSTYAR). Catalysis depends on Glu135, which acts as the Proton donor/acceptor. 3 residues coordinate dCTP: Gln154, Tyr168, and Gln178.

This sequence belongs to the dCTP deaminase family. As to quaternary structure, homotrimer.

It carries out the reaction dCTP + H2O + H(+) = dUTP + NH4(+). It functions in the pathway pyrimidine metabolism; dUMP biosynthesis; dUMP from dCTP (dUTP route): step 1/2. Functionally, catalyzes the deamination of dCTP to dUTP. The sequence is that of dCTP deaminase from Helicobacter pylori (strain Shi470).